Reading from the N-terminus, the 1188-residue chain is Phospholipid-transporting ATPase IB (1188 aa).

Residues 1-94 are Cytoplasmic-facing; the sequence is MLNGAGLDKA…PRFLYEQIRR (94 aa). Threonine 45 is modified (phosphothreonine). A helical transmembrane segment spans residues 95–115; the sequence is AANAFFLFIALLQQIPDVSPT. Topologically, residues 116-119 are extracellular; that stretch reads GRYT. The helical transmembrane segment at 120-140 threads the bilayer; it reads TLVPLIIILTIAGIKEIVEDF. Topologically, residues 141–316 are cytoplasmic; it reads KRHKADNAVN…SNVEKVTNVQ (176 aa). Residues 317–337 form a helical membrane-spanning segment; the sequence is ILVLFGILLVMALVSSAGALY. The Extracellular portion of the chain corresponds to 338–364; the sequence is WNRSHGEKNWYIKKMDTTSDNFGYNLL. Residues 365–385 traverse the membrane as a helical segment; sequence TFIILYNNLIPISLLVTLEVV. At 386-887 the chain is on the cytoplasmic side; sequence KYTQALFINW…CILYCFYKNV (502 aa). Aspartate 428 acts as the 4-aspartylphosphate intermediate in catalysis. Positions 428, 429, 430, 528, 569, 592, 625, 705, 706, 707, 795, and 801 each coordinate ATP. Aspartate 428 contributes to the Mg(2+) binding site. A Mg(2+)-binding site is contributed by threonine 430. Aspartate 821 serves as a coordination point for Mg(2+). 2 residues coordinate ATP: asparagine 824 and aspartate 825. Aspartate 825 is a binding site for Mg(2+). A helical transmembrane segment spans residues 888 to 908; that stretch reads VLYIIELWFAFVNGFSGQILF. The Extracellular segment spans residues 909 to 910; that stretch reads ER. A helical transmembrane segment spans residues 911–931; the sequence is WCIGLYNVIFTALPPFTLGIF. Over 932–959 the chain is Cytoplasmic; it reads ERSCTQESMLRFPQLYKITQNGEGFNTK. Residues 960-980 form a helical membrane-spanning segment; sequence VFWGHCINALVHSLILFWFPM. The Extracellular portion of the chain corresponds to 981–997; it reads KALEHDTVLTSGHATDY. A helical membrane pass occupies residues 998 to 1018; that stretch reads LFVGNIVYTYVVVTVCLKAGL. Over 1019-1028 the chain is Cytoplasmic; it reads ETTAWTKFSH. The helical transmembrane segment at 1029-1049 threads the bilayer; sequence LAVWGSMLTWLVFFGIYSTIW. Over 1050 to 1063 the chain is Extracellular; that stretch reads PTIPIAPDMRGQAT. A helical membrane pass occupies residues 1064–1084; the sequence is MVLSSAHFWLGLFLVPTACLI. Over 1085–1188 the chain is Cytoplasmic; sequence EDVAWRAAKH…DTTKKKSRKK (104 aa). Residues 1162–1188 are disordered; sequence SQEEHGAVSQEEVIRAYDTTKKKSRKK. Residues 1163 to 1182 are compositionally biased toward basic and acidic residues; it reads QEEHGAVSQEEVIRAYDTTK.

It belongs to the cation transport ATPase (P-type) (TC 3.A.3) family. Type IV subfamily. Component of a P4-ATPase flippase complex which consists of a catalytic alpha subunit and an accessory beta subunit. Interacts with TMEM30A to form a flippase complex. Requires Mg(2+) as cofactor. Strongly expressed in the brain, cerebellum, retina and testis.

It is found in the membrane. Its subcellular location is the golgi apparatus membrane. The protein resides in the endosome membrane. The protein localises to the cell membrane. It localises to the photoreceptor outer segment membrane. It is found in the photoreceptor inner segment membrane. The enzyme catalyses ATP + H2O + phospholipidSide 1 = ADP + phosphate + phospholipidSide 2.. It carries out the reaction a 1,2-diacyl-sn-glycero-3-phospho-L-serine(out) + ATP + H2O = a 1,2-diacyl-sn-glycero-3-phospho-L-serine(in) + ADP + phosphate + H(+). It catalyses the reaction a 1,2-diacyl-sn-glycero-3-phosphoethanolamine(in) + ATP + H2O = a 1,2-diacyl-sn-glycero-3-phosphoethanolamine(out) + ADP + phosphate + H(+). Catalytic component of a P4-ATPase flippase complex which catalyzes the hydrolysis of ATP coupled to the transport of aminophospholipids from the outer to the inner leaflet of various membranes and ensures the maintenance of asymmetric distribution of phospholipids. Able to translocate phosphatidylserine, but not phosphatidylcholine. Phospholipid translocation also seems to be implicated in vesicle formation and in uptake of lipid signaling molecules. Reconstituted to liposomes, the ATP8A2:TMEM30A flippase complex predominantly transports phosphatidylserine (PS) and to a lesser extent phosphatidylethanolamine (PE). Phospholipid translocation is not associated with a countertransport of an inorganic ion or other charged substrate from the cytoplasmic side toward the exoplasm in connection with the phosphorylation from ATP. ATP8A2:TMEM30A may be involved in regulation of neurite outgrowth. Proposed to function in the generation and maintenance of phospholipid asymmetry in photoreceptor disk membranes and neuronal axon membranes. May be involved in vesicle trafficking in neuronal cells. Required for normal visual and auditory function; involved in photoreceptor and inner ear spiral ganglion cell survival. The polypeptide is Phospholipid-transporting ATPase IB (Homo sapiens (Human)).